A 421-amino-acid chain; its full sequence is Tryptophan synthase beta chain (421 aa).

An N6-(pyridoxal phosphate)lysine modification is found at K110.

This sequence belongs to the TrpB family. In terms of assembly, tetramer of two alpha and two beta chains. Pyridoxal 5'-phosphate is required as a cofactor.

It catalyses the reaction (1S,2R)-1-C-(indol-3-yl)glycerol 3-phosphate + L-serine = D-glyceraldehyde 3-phosphate + L-tryptophan + H2O. It functions in the pathway amino-acid biosynthesis; L-tryptophan biosynthesis; L-tryptophan from chorismate: step 5/5. Its function is as follows. The beta subunit is responsible for the synthesis of L-tryptophan from indole and L-serine. This Mycobacterium intracellulare protein is Tryptophan synthase beta chain (trpB).